The primary structure comprises 164 residues: Peptidyl-prolyl cis-trans isomerase A-like 4C (164 aa).

The PPIase cyclophilin-type domain maps to 7–163 (FFDITVDGKP…KKITIADCGQ (157 aa)).

The protein belongs to the cyclophilin-type PPIase family. PPIase A subfamily.

It is found in the cytoplasm. It catalyses the reaction [protein]-peptidylproline (omega=180) = [protein]-peptidylproline (omega=0). PPIases accelerate the folding of proteins. It catalyzes the cis-trans isomerization of proline imidic peptide bonds in oligopeptides. The protein is Peptidyl-prolyl cis-trans isomerase A-like 4C of Homo sapiens (Human).